Reading from the N-terminus, the 313-residue chain is Cytochrome c biogenesis protein CcsA (313 aa).

8 helical membrane-spanning segments follow: residues 9-29 (ILTH…LITF), 44-64 (GIIV…ISSG), 71-91 (LYES…IPYF), 111-131 (GFAT…VPAL), 143-163 (MILG…LLVI), 217-237 (VISL…VWAN), 244-264 (WNWD…AIYL), and 278-298 (AIVA…VNLL).

This sequence belongs to the CcmF/CycK/Ccl1/NrfE/CcsA family. May interact with Ccs1.

The protein localises to the plastid. It localises to the chloroplast thylakoid membrane. Required during biogenesis of c-type cytochromes (cytochrome c6 and cytochrome f) at the step of heme attachment. The protein is Cytochrome c biogenesis protein CcsA of Solanum bulbocastanum (Wild potato).